The chain runs to 286 residues: Probable protein VP2 (286 aa).

Disordered stretches follow at residues 67 to 108 and 184 to 286; these read LPAA…GPED and QAAR…GGGI. The segment covering 222 to 241 has biased composition (basic residues); sequence GKTRSRRKAGRKAQRKRRRP. Residues 242-265 show a composition bias toward low complexity; it reads SPSSSSSSCSNSESWESNSDSCST.

Post-translationally, phosphorylated at C-terminal serines.

This chain is Probable protein VP2, found in Homo sapiens (Human).